The chain runs to 171 residues: Protein-export protein SecB (171 aa).

The protein belongs to the SecB family. In terms of assembly, homotetramer, a dimer of dimers. One homotetramer interacts with 1 SecA dimer.

The protein localises to the cytoplasm. Its function is as follows. One of the proteins required for the normal export of preproteins out of the cell cytoplasm. It is a molecular chaperone that binds to a subset of precursor proteins, maintaining them in a translocation-competent state. It also specifically binds to its receptor SecA. This is Protein-export protein SecB from Gluconacetobacter diazotrophicus (strain ATCC 49037 / DSM 5601 / CCUG 37298 / CIP 103539 / LMG 7603 / PAl5).